Reading from the N-terminus, the 413-residue chain is Multifunctional CCA protein (413 aa).

The ATP site is built by G8 and R11. Residues G8 and R11 each contribute to the CTP site. Residues D21 and D23 each coordinate Mg(2+). Residues R91, R137, and R140 each contribute to the ATP site. CTP is bound by residues R91, R137, and R140. An HD domain is found at 228-329; sequence TGKHTLLSLK…VSLFDKGDFW (102 aa).

The protein belongs to the tRNA nucleotidyltransferase/poly(A) polymerase family. Bacterial CCA-adding enzyme type 1 subfamily. As to quaternary structure, monomer. Can also form homodimers and oligomers. It depends on Mg(2+) as a cofactor. The cofactor is Ni(2+).

The catalysed reaction is a tRNA precursor + 2 CTP + ATP = a tRNA with a 3' CCA end + 3 diphosphate. The enzyme catalyses a tRNA with a 3' CCA end + 2 CTP + ATP = a tRNA with a 3' CCACCA end + 3 diphosphate. Its function is as follows. Catalyzes the addition and repair of the essential 3'-terminal CCA sequence in tRNAs without using a nucleic acid template. Adds these three nucleotides in the order of C, C, and A to the tRNA nucleotide-73, using CTP and ATP as substrates and producing inorganic pyrophosphate. tRNA 3'-terminal CCA addition is required both for tRNA processing and repair. Also involved in tRNA surveillance by mediating tandem CCA addition to generate a CCACCA at the 3' terminus of unstable tRNAs. While stable tRNAs receive only 3'-terminal CCA, unstable tRNAs are marked with CCACCA and rapidly degraded. The sequence is that of Multifunctional CCA protein from Shewanella denitrificans (strain OS217 / ATCC BAA-1090 / DSM 15013).